Reading from the N-terminus, the 65-residue chain is Large ribosomal subunit protein bL35 (65 aa).

Residues Ala-30–Met-65 form a disordered region. A compositionally biased stretch (basic and acidic residues) spans Thr-56–Met-65.

This sequence belongs to the bacterial ribosomal protein bL35 family.

The polypeptide is Large ribosomal subunit protein bL35 (Mycoplasma mobile (strain ATCC 43663 / 163K / NCTC 11711) (Mesomycoplasma mobile)).